Reading from the N-terminus, the 378-residue chain is Deoxyguanosinetriphosphate triphosphohydrolase-like protein (378 aa).

Residues 1–28 (MLAPFACQPGESRGRQKPESMSTFRSPF) are disordered. The region spanning 62–198 (RLTHSIEVAQ…AAIADDVAYS (137 aa)) is the HD domain.

It belongs to the dGTPase family. Type 2 subfamily.

The chain is Deoxyguanosinetriphosphate triphosphohydrolase-like protein from Cereibacter sphaeroides (strain ATCC 17029 / ATH 2.4.9) (Rhodobacter sphaeroides).